The sequence spans 397 residues: Protein ROH1D (397 aa).

Residues Leu247–Ala267 traverse the membrane as a helical segment.

It belongs to the ROH1 family. As to quaternary structure, interacts with EXO70C2. Mostly expressed in mature pollen.

Its subcellular location is the membrane. It localises to the cytoplasm. The protein resides in the cytosol. Its function is as follows. Involved in the regulation of plant growth, and modulates pollen development to ensure male fertility. May also affect the composition of the inner seed coat mucilage layer. This chain is Protein ROH1D, found in Arabidopsis thaliana (Mouse-ear cress).